Consider the following 163-residue polypeptide: SsrA-binding protein (163 aa).

It belongs to the SmpB family.

The protein localises to the cytoplasm. Its function is as follows. Required for rescue of stalled ribosomes mediated by trans-translation. Binds to transfer-messenger RNA (tmRNA), required for stable association of tmRNA with ribosomes. tmRNA and SmpB together mimic tRNA shape, replacing the anticodon stem-loop with SmpB. tmRNA is encoded by the ssrA gene; the 2 termini fold to resemble tRNA(Ala) and it encodes a 'tag peptide', a short internal open reading frame. During trans-translation Ala-aminoacylated tmRNA acts like a tRNA, entering the A-site of stalled ribosomes, displacing the stalled mRNA. The ribosome then switches to translate the ORF on the tmRNA; the nascent peptide is terminated with the 'tag peptide' encoded by the tmRNA and targeted for degradation. The ribosome is freed to recommence translation, which seems to be the essential function of trans-translation. The polypeptide is SsrA-binding protein (Shewanella putrefaciens (strain CN-32 / ATCC BAA-453)).